Consider the following 27-residue polypeptide: Phospholipase A2 taicatoxin (27 aa).

The protein belongs to the phospholipase A2 family. Group I subfamily. In terms of assembly, heterotrimer composed of an alpha-neurotoxin-like peptide of 8 kDa (AC P0CJ35), this neurotoxic phospholipase of 16 kDa and a serine protease inhibitor of 7 kDa (AC B7S4N9) at an approximate stoichiometry of 1:1:4; non-covalently linked. Ca(2+) serves as cofactor. In terms of processing, contains 7 disulfide bonds. Expressed by the venom gland.

It localises to the secreted. The catalysed reaction is a 1,2-diacyl-sn-glycero-3-phosphocholine + H2O = a 1-acyl-sn-glycero-3-phosphocholine + a fatty acid + H(+). Heterotrimer: blocks the voltage-dependent L-type calcium channels from the heart, and the small conductance calcium-activated potassium channels in the chromaffin cells and in the brain. Is very toxic to mice. In terms of biological role, monomer: Snake venom phospholipase A2 (PLA2) that has neurotoxic activities. Voltage-dependently affects ionic currents in chick (Gallus domesticus) dorsal root ganglion cells. PLA2 catalyzes the calcium-dependent hydrolysis of the 2-acyl groups in 3-sn-phosphoglycerides. This Oxyuranus scutellatus scutellatus (Australian taipan) protein is Phospholipase A2 taicatoxin.